The chain runs to 209 residues: Outer-membrane lipoprotein carrier protein (209 aa).

An N-terminal signal peptide occupies residues M1–A21.

This sequence belongs to the LolA family. In terms of assembly, monomer.

Its subcellular location is the periplasm. Functionally, participates in the translocation of lipoproteins from the inner membrane to the outer membrane. Only forms a complex with a lipoprotein if the residue after the N-terminal Cys is not an aspartate (The Asp acts as a targeting signal to indicate that the lipoprotein should stay in the inner membrane). The sequence is that of Outer-membrane lipoprotein carrier protein from Xanthomonas campestris pv. campestris (strain 8004).